Here is a 227-residue protein sequence, read N- to C-terminus: Mitochondrial inner membrane protease ATP23 (227 aa).

H124 contacts a divalent metal cation. E125 is a catalytic residue. H128 is a binding site for a divalent metal cation.

Belongs to the peptidase M76 family. In terms of assembly, interacts with ATP6.

The protein resides in the mitochondrion inner membrane. Its function is as follows. Has a dual role in the assembly of mitochondrial ATPase. Acts as a protease that removes the N-terminal 10 residues of mitochondrial ATPase CF(0) subunit 6 (ATP6) at the intermembrane space side. Also involved in the correct assembly of the membrane-embedded ATPase CF(0) particle, probably mediating association of ATP6 with the subunit 9 ring. This Saccharomyces cerevisiae (strain YJM789) (Baker's yeast) protein is Mitochondrial inner membrane protease ATP23 (ATP23).